We begin with the raw amino-acid sequence, 130 residues long: Albumin-1 D (130 aa).

The first 26 residues, 1 to 26 (MASVKLASLIVLFATLGMFLTKNVGA), serve as a signal peptide directing secretion. 3 cysteine pairs are disulfide-bonded: C29-C46, C33-C48, and C41-C58. Propeptides lie at residues 64–69 (VFLKAN) and 123–130 (LLKSVSTA).

In terms of processing, the C-terminal glycine may be removed from PA1b. As to expression, major component of both the cotyledons and embryonic axes of mature seeds.

Its function is as follows. PA1b binds to basic 7S globulin (BG) and stimulates its phosphorylation activity. Involved in the signal transduction system to regulate the growth and differentiation as a hormone peptide. Toxic to various insects through binding to a high affinity binding site in the insect gut. In Pisum sativum (Garden pea), this protein is Albumin-1 D.